The sequence spans 448 residues: ATP-dependent RNA helicase sub2 (448 aa).

Over residues aspartate 19–alanine 29 the composition is skewed to low complexity. Residues aspartate 19–glycine 43 form a disordered region. Residues threonine 58–glutamine 86 carry the Q motif motif. The Helicase ATP-binding domain maps to isoleucine 89–valine 271. Alanine 102–threonine 109 contacts ATP. The short motif at aspartate 211–aspartate 214 is the DECD box element. Residues glycine 283–serine 444 enclose the Helicase C-terminal domain.

Belongs to the DEAD box helicase family. DECD subfamily.

The protein localises to the nucleus. It carries out the reaction ATP + H2O = ADP + phosphate + H(+). In terms of biological role, ATP-binding RNA helicase involved in transcription elongation and required for the export of mRNA out of the nucleus. SUB2 also plays a role in pre-mRNA splicing and spliceosome assembly. May be involved in rDNA and telomeric silencing, and maintenance of genome integrity. This Aspergillus fumigatus (strain ATCC MYA-4609 / CBS 101355 / FGSC A1100 / Af293) (Neosartorya fumigata) protein is ATP-dependent RNA helicase sub2 (sub2).